Consider the following 340-residue polypeptide: Putative 2-hydroxyacid dehydrogenase C1773.17c (340 aa).

NAD(+) is bound by residues 169 to 170 (AI), 249 to 251 (TAR), and D275. R251 is an active-site residue. Residue E280 is part of the active site. The Proton donor role is filled by H298. 298–301 (HCGV) contacts NAD(+).

The protein belongs to the D-isomer specific 2-hydroxyacid dehydrogenase family.

The polypeptide is Putative 2-hydroxyacid dehydrogenase C1773.17c (Schizosaccharomyces pombe (strain 972 / ATCC 24843) (Fission yeast)).